The primary structure comprises 387 residues: Putative transmembrane protein At3g54730 (387 aa).

Positions 10-25 (PAPPLLLPSPNPPPCA) are enriched in pro residues. A disordered region spans residues 10–45 (PAPPLLLPSPNPPPCALPQDLTSLVSPSEPPDPPDP). The next 8 membrane-spanning stretches (helical) occupy residues 97–117 (VFPL…HPLV), 128–148 (GSNF…ILQF), 154–174 (VMIS…MILL), 186–206 (VLFS…VGLI), 221–241 (IQKL…FLEI), 292–312 (SWCF…YPLE), 335–355 (FSTI…FIFF), and 362–382 (PFVA…LNHF).

The protein resides in the membrane. This Arabidopsis thaliana (Mouse-ear cress) protein is Putative transmembrane protein At3g54730.